The following is a 305-amino-acid chain: UDP-3-O-acyl-N-acetylglucosamine deacetylase (305 aa).

Residues H79, H238, and D242 each coordinate Zn(2+). The Proton donor role is filled by H265.

This sequence belongs to the LpxC family. It depends on Zn(2+) as a cofactor.

It carries out the reaction a UDP-3-O-[(3R)-3-hydroxyacyl]-N-acetyl-alpha-D-glucosamine + H2O = a UDP-3-O-[(3R)-3-hydroxyacyl]-alpha-D-glucosamine + acetate. It functions in the pathway glycolipid biosynthesis; lipid IV(A) biosynthesis; lipid IV(A) from (3R)-3-hydroxytetradecanoyl-[acyl-carrier-protein] and UDP-N-acetyl-alpha-D-glucosamine: step 2/6. In terms of biological role, catalyzes the hydrolysis of UDP-3-O-myristoyl-N-acetylglucosamine to form UDP-3-O-myristoylglucosamine and acetate, the committed step in lipid A biosynthesis. The chain is UDP-3-O-acyl-N-acetylglucosamine deacetylase from Haemophilus influenzae (strain PittGG).